The sequence spans 231 residues: Aquaporin Z (231 aa).

2 helical membrane-spanning segments follow: residues 9 to 29 (CFGT…AAGF) and 34 to 54 (IGFA…AFAV). The NPA 1 signature appears at 63–65 (NPA). 3 helical membrane-spanning segments follow: residues 82 to 102 (VGYV…LYLI), 129 to 149 (YSML…LLVI), and 156 to 176 (FAPA…IHLI). The NPA 2 motif lies at 186–188 (NPA). The chain crosses the membrane as a helical span at residues 202–222 (LEQLWFFWVVPIVGGIIGGLI).

This sequence belongs to the MIP/aquaporin (TC 1.A.8) family. Homotetramer.

The protein resides in the cell inner membrane. It carries out the reaction H2O(in) = H2O(out). Channel that permits osmotically driven movement of water in both directions. It is involved in the osmoregulation and in the maintenance of cell turgor during volume expansion in rapidly growing cells. It mediates rapid entry or exit of water in response to abrupt changes in osmolarity. The protein is Aquaporin Z of Escherichia coli O157:H7.